The chain runs to 207 residues: Protein Nef (207 aa).

A lipid anchor (N-myristoyl glycine; by host) is attached at Gly-2. Ser-6 bears the Phosphoserine; by host mark. The segment at 62–66 (EEEEE) is acidic; interacts with host PACS1 and PACS2; stabilizes the interaction of NEF/MHC-I with host AP1M1; necessary for MHC-I internalization. Positions 70–79 (PVRPQVPLRP) are SH3-binding; interaction with Src family tyrosine kinases. Positions 73–76 (PQVP) match the PxxP; stabilizes the interaction of NEF/MHC-I with host AP1M1; necessary for MHC-I internalization motif. Residues 109–125 (EILDLWVYNTQGYFPDW) form a mediates dimerization, Nef-PTE1 interaction region. The tract at residues 149 to 181 (VDPQDVEKANEGENNSLLHPMCQHGIEDPEREV) is binding to ATP6V1H. Positions 165 to 166 (LL) match the Dileucine internalization motif; necessary for CD4 internalization motif. The short motif at 175–176 (ED) is the Diacidic; necessary for CD4 internalization element.

It belongs to the lentivirus primate group Nef protein family. In terms of assembly, monomer; cytosolic form. Homodimer; membrane bound form. Interacts with Nef associated p21-activated kinase (PAK2); this interaction activates PAK2. Associates with the Nef-MHC-I-AP1 complex; this complex is required for MHC-I internalization. Interacts (via C-terminus) with host PI3-kinase. Interacts with host PACS1; this interaction seems to be weak. Interacts with host PACS2. Interacts with host LCK and MAPK3; these interactions inhibit the kinase activity of the latter. Interacts with host ATP6V1H; this interaction may play a role in CD4 endocytosis. Associates with the CD4-Nef-AP2 complex; this complex is required for CD4 internalization. Interacts with host AP2 subunit alpha and AP2 subunit sigma2. Interacts with TCR-zeta chain; this interaction up-regulates the Fas ligand (FasL) surface expression. Interacts with host HCK, LYN, and SRC; these interactions activate the Src family kinases. Interacts with MAP3K5; this interaction inhibits the Fas and TNFR-mediated death signals. Interacts with beta-COP and PTE1. Interacts with human RACK1; this increases Nef phosphorylation by PKC. Interacts with TP53; this interaction decreases the half-life of TP53, protecting the infected cell against p53-mediated apoptosis. The virion-associated Nef proteins are cleaved by the viral protease to release the soluble C-terminal core protein. Nef is probably cleaved concomitantly with viral structural proteins on maturation of virus particles. Post-translationally, myristoylated. In terms of processing, phosphorylated on serine residues, probably by host PKCdelta and theta.

Its subcellular location is the host cell membrane. The protein localises to the virion. The protein resides in the secreted. It localises to the host Golgi apparatus membrane. Factor of infectivity and pathogenicity, required for optimal virus replication. Alters numerous pathways of T-lymphocyte function and down-regulates immunity surface molecules in order to evade host defense and increase viral infectivity. Alters the functionality of other immunity cells, like dendritic cells, monocytes/macrophages and NK cells. In terms of biological role, in infected CD4(+) T-lymphocytes, down-regulates the surface MHC-I, mature MHC-II, CD4, CD28, CCR5 and CXCR4 molecules. Mediates internalization and degradation of host CD4 through the interaction of with the cytoplasmic tail of CD4, the recruitment of AP-2 (clathrin adapter protein complex 2), internalization through clathrin coated pits, and subsequent transport to endosomes and lysosomes for degradation. Diverts host MHC-I molecules to the trans-Golgi network-associated endosomal compartments by an endocytic pathway to finally target them for degradation. MHC-I down-regulation may involve AP-1 (clathrin adapter protein complex 1) or possibly Src family kinase-ZAP70/Syk-PI3K cascade recruited by PACS2. In consequence infected cells are masked for immune recognition by cytotoxic T-lymphocytes. Decreasing the number of immune receptors also prevents reinfection by more HIV particles (superinfection). Down-regulates host SERINC3 and SERINC5 thereby excluding these proteins from the viral particles. Virion infectivity is drastically higher when SERINC3 or SERINC5 are excluded from the viral envelope, because these host antiviral proteins impair the membrane fusion event necessary for subsequent virion penetration. Its function is as follows. Bypasses host T-cell signaling by inducing a transcriptional program nearly identical to that of anti-CD3 cell activation. Interaction with TCR-zeta chain up-regulates the Fas ligand (FasL). Increasing surface FasL molecules and decreasing surface MHC-I molecules on infected CD4(+) cells send attacking cytotoxic CD8+ T-lymphocytes into apoptosis. Functionally, plays a role in optimizing the host cell environment for viral replication without causing cell death by apoptosis. Protects the infected cells from apoptosis in order to keep them alive until the next virus generation is ready to strike. Inhibits the Fas and TNFR-mediated death signals by blocking MAP3K5/ASK1. Decreases the half-life of TP53, protecting the infected cell against p53-mediated apoptosis. Inhibits the apoptotic signals regulated by the Bcl-2 family proteins through the formation of a Nef/PI3-kinase/PAK2 complex that leads to activation of PAK2 and induces phosphorylation of host BAD. Extracellular Nef protein targets CD4(+) T-lymphocytes for apoptosis by interacting with CXCR4 surface receptors. In Homo sapiens (Human), this protein is Protein Nef.